A 375-amino-acid polypeptide reads, in one-letter code: Riboflavin biosynthesis protein RibD (375 aa).

Positions 1–150 (MEVLSEQQLF…QPYLYQRERG (150 aa)) are deaminase. The region spanning 6 to 127 (EQQLFFMRKA…ARLQAAGIPV (122 aa)) is the CMP/dCMP-type deaminase domain. Histidine 55 contributes to the Zn(2+) binding site. Glutamate 57 functions as the Proton donor in the catalytic mechanism. Residues cysteine 80 and cysteine 89 each contribute to the Zn(2+) site. Positions 151 to 375 (LPWVVMKTAA…LEQESVDKKG (225 aa)) are reductase. Alanine 159 contributes to the NADP(+) binding site. Residue serine 173 coordinates substrate. Tryptophan 175 contacts NADP(+). Residue arginine 189 participates in substrate binding. Threonine 201 and aspartate 205 together coordinate NADP(+). 2 residues coordinate substrate: leucine 209 and arginine 212. Serine 230 provides a ligand contact to NADP(+). Glutamate 299 serves as a coordination point for substrate. 301 to 307 (GAQLHSA) serves as a coordination point for NADP(+).

In the N-terminal section; belongs to the cytidine and deoxycytidylate deaminase family. It in the C-terminal section; belongs to the HTP reductase family. Requires Zn(2+) as cofactor.

It carries out the reaction 2,5-diamino-6-hydroxy-4-(5-phosphoribosylamino)-pyrimidine + H2O + H(+) = 5-amino-6-(5-phospho-D-ribosylamino)uracil + NH4(+). It catalyses the reaction 5-amino-6-(5-phospho-D-ribitylamino)uracil + NADP(+) = 5-amino-6-(5-phospho-D-ribosylamino)uracil + NADPH + H(+). It participates in cofactor biosynthesis; riboflavin biosynthesis; 5-amino-6-(D-ribitylamino)uracil from GTP: step 2/4. Its pathway is cofactor biosynthesis; riboflavin biosynthesis; 5-amino-6-(D-ribitylamino)uracil from GTP: step 3/4. In terms of biological role, converts 2,5-diamino-6-(ribosylamino)-4(3h)-pyrimidinone 5'-phosphate into 5-amino-6-(ribosylamino)-2,4(1h,3h)-pyrimidinedione 5'-phosphate. In Chlamydia trachomatis serovar D (strain ATCC VR-885 / DSM 19411 / UW-3/Cx), this protein is Riboflavin biosynthesis protein RibD (ribD).